The chain runs to 333 residues: Ribosomal RNA small subunit methyltransferase C (333 aa).

This sequence belongs to the methyltransferase superfamily. RsmC family. In terms of assembly, monomer.

The protein resides in the cytoplasm. It catalyses the reaction guanosine(1207) in 16S rRNA + S-adenosyl-L-methionine = N(2)-methylguanosine(1207) in 16S rRNA + S-adenosyl-L-homocysteine + H(+). In terms of biological role, specifically methylates the guanine in position 1207 of 16S rRNA in the 30S particle. The polypeptide is Ribosomal RNA small subunit methyltransferase C (Actinobacillus succinogenes (strain ATCC 55618 / DSM 22257 / CCUG 43843 / 130Z)).